The following is a 157-amino-acid chain: Endoribonuclease YbeY (157 aa).

Zn(2+) is bound by residues histidine 114, histidine 118, and histidine 124.

The protein belongs to the endoribonuclease YbeY family. The cofactor is Zn(2+).

It is found in the cytoplasm. In terms of biological role, single strand-specific metallo-endoribonuclease involved in late-stage 70S ribosome quality control and in maturation of the 3' terminus of the 16S rRNA. In Yersinia pseudotuberculosis serotype O:1b (strain IP 31758), this protein is Endoribonuclease YbeY.